Consider the following 246-residue polypeptide: Pyridoxine 5'-phosphate synthase (246 aa).

Asn12 serves as a coordination point for 3-amino-2-oxopropyl phosphate. 14–15 lines the 1-deoxy-D-xylulose 5-phosphate pocket; sequence DH. Residue Arg23 participates in 3-amino-2-oxopropyl phosphate binding. The active-site Proton acceptor is the His48. Residues Arg50 and His55 each contribute to the 1-deoxy-D-xylulose 5-phosphate site. Glu75 serves as the catalytic Proton acceptor. A 1-deoxy-D-xylulose 5-phosphate-binding site is contributed by Thr105. The Proton donor role is filled by His196. 3-amino-2-oxopropyl phosphate contacts are provided by residues Gly197 and 218 to 219; that span reads GH.

This sequence belongs to the PNP synthase family. In terms of assembly, homooctamer; tetramer of dimers.

Its subcellular location is the cytoplasm. The catalysed reaction is 3-amino-2-oxopropyl phosphate + 1-deoxy-D-xylulose 5-phosphate = pyridoxine 5'-phosphate + phosphate + 2 H2O + H(+). It functions in the pathway cofactor biosynthesis; pyridoxine 5'-phosphate biosynthesis; pyridoxine 5'-phosphate from D-erythrose 4-phosphate: step 5/5. Catalyzes the complicated ring closure reaction between the two acyclic compounds 1-deoxy-D-xylulose-5-phosphate (DXP) and 3-amino-2-oxopropyl phosphate (1-amino-acetone-3-phosphate or AAP) to form pyridoxine 5'-phosphate (PNP) and inorganic phosphate. In Pseudomonas putida (strain W619), this protein is Pyridoxine 5'-phosphate synthase.